The primary structure comprises 430 residues: FAD-dependent monooxygenase asL4 (430 aa).

FAD-binding positions include 11-14 (GGIA), 33-34 (ER), R108, and Y278.

Belongs to the aromatic-ring hydroxylase family. FAD is required as a cofactor.

It functions in the pathway secondary metabolite biosynthesis; terpenoid biosynthesis. In terms of biological role, flavin-dependent monooxygenase; part of the gene cluster that mediates the biosynthesis of xenovulene A, an unusual meroterpenoid that has potent inhibitory effects on the human gamma-aminobutyrate A (GABAA) benzodiazepine receptor. The first step of xenovulene A biosynthesis is the biosynthesis of 3-methylorcinaldehyde performed by the non-reducing polyketide synthase aspks1. The salicylate hydroxylase asL1 then catalyzes the oxidative dearomatization of 3-methylorcinaldehyde to yield a dearomatized hydroxycyclohexadione. The 2-oxoglutarate-dependent dioxygenase asL3 further catalyzes the oxidative ring expansion to provide the first tropolone metabolite. The cytochrome P450 monooxygenase asR2 allows the synthesis of tropolone hemiacetal. In parallel, a previously unrecognised class of terpene cyclase, asR6, produces alpha-humulene from farnesylpyrophosphate (FPP). The putative Diels-Alderase asR5 probably catalyzes the formation of the tropolone-humulene skeleton by linking humulene and the polyketide moiety. Oxidative-ring contractions catalyzed by asL4 and asL6 then processively remove carbon atoms from the polyketide to yield xenovulene A. This Sarocladium schorii (Acremonium strictum (strain IMI 501407)) protein is FAD-dependent monooxygenase asL4.